We begin with the raw amino-acid sequence, 651 residues long: Probable export ATP-binding/permease protein Pfl01_2215 (651 aa).

An ABC transporter domain is found at 6–244; the sequence is LQLTGISRSF…LSNEDAVPKS (239 aa). 42–49 contacts ATP; it reads GASGSGKS. 5 helical membrane-spanning segments follow: residues 250–270, 276–296, 524–544, 585–605, and 614–634; these read LVAS…ALIS, LLTM…SAIG, LALL…IGVM, LGGA…SLFI, and LTSV…FGFV.

This sequence belongs to the ABC transporter superfamily. Macrolide exporter (TC 3.A.1.122) family. In terms of assembly, probably part of a tripartite efflux system, which is composed of an inner membrane transporter, a periplasmic membrane fusion protein, and an outer membrane component.

The protein localises to the cell inner membrane. Its function is as follows. Probably part of a tripartite efflux system. This Pseudomonas fluorescens (strain Pf0-1) protein is Probable export ATP-binding/permease protein Pfl01_2215.